A 466-amino-acid chain; its full sequence is 3-isopropylmalate dehydratase large subunit (466 aa).

[4Fe-4S] cluster contacts are provided by Cys-347, Cys-407, and Cys-410.

It belongs to the aconitase/IPM isomerase family. LeuC type 1 subfamily. Heterodimer of LeuC and LeuD. [4Fe-4S] cluster is required as a cofactor.

It catalyses the reaction (2R,3S)-3-isopropylmalate = (2S)-2-isopropylmalate. The protein operates within amino-acid biosynthesis; L-leucine biosynthesis; L-leucine from 3-methyl-2-oxobutanoate: step 2/4. Functionally, catalyzes the isomerization between 2-isopropylmalate and 3-isopropylmalate, via the formation of 2-isopropylmaleate. The polypeptide is 3-isopropylmalate dehydratase large subunit (Escherichia coli O9:H4 (strain HS)).